The chain runs to 87 residues: MKTFESLFAELSEKAQTRPEGSLTVDELDKGTHFIGKKIIEEAGETWMAAEYEGADRTAEEMSQLLYHVQVMMIKHGLTLEDVYKHL.

Belongs to the PRA-PH family.

It localises to the cytoplasm. The catalysed reaction is 1-(5-phospho-beta-D-ribosyl)-ATP + H2O = 1-(5-phospho-beta-D-ribosyl)-5'-AMP + diphosphate + H(+). It functions in the pathway amino-acid biosynthesis; L-histidine biosynthesis; L-histidine from 5-phospho-alpha-D-ribose 1-diphosphate: step 2/9. This Bifidobacterium longum (strain DJO10A) protein is Phosphoribosyl-ATP pyrophosphatase.